The chain runs to 184 residues: Major urinary protein 3 (184 aa).

The first 22 residues, 1 to 22 (MKLLLPLLLLLCLELTLVCIHA), serve as a signal peptide directing secretion. N-linked (GlcNAc...) asparagine glycosylation occurs at Asn-66. Cys-86 and Cys-179 are disulfide-bonded.

This sequence belongs to the calycin superfamily. Lipocalin family. Glycosylated. In terms of tissue distribution, abundant in the urine of adult male mice but absent from that of females.

The protein localises to the secreted. Functionally, binds pheromones that are released from drying urine of males. These pheromones affect the sexual behavior of females. In Mus musculus (Mouse), this protein is Major urinary protein 3 (Mup3).